A 324-amino-acid chain; its full sequence is Esterase FPSE_08126 (324 aa).

Catalysis depends on residues serine 156, aspartate 255, and histidine 285.

The protein belongs to the AB hydrolase 3 family.

In terms of biological role, esterase; part of the Fusarium detoxification of benzoxazolinone cluster involved in the degradation of benzoxazolinones produced by the host plant. Maize, wheat, and rye produce the 2 benzoxazinone phytoanticipins 2,4-dihy-droxy-7-methoxy-1,4-benzoxazin-3-one (DIMBOA) and 2,4-dihydroxy-1,4-benzoxazin-3-one (DIBOA) that, due to their inherent instability once released, spontaneously degrade to the more stable corresponding benzoxazolinones, 6-methoxy-2-benzoxazolinone (MBOA) and 2-benzoxazolinone (BOA), respectively. The first step in the detoxification of benzoxazolinones involves the hydrolysis of the cyclic ester bond of benzoxazolinones by the gamma-lactamase FDB1 to aminophenols. FDB1 is able to convert 2-benzoxazolinone (BOA) into 2-aminophenol (2-AP), as well as 6-methoxy-2-benzoxazolinone (MBOA) into 5-methoxy-2-aminophenol (2-AMP). The N-malonyltransferase FDB2 then metabolizes aminophenols via N-malonylation to non-toxic malonamic acids. FDB2 converts 2-AP into N-(2-hydroxyphenyl) malonamic acid (HPMA) and 2-AMP into N-(2-hydroxy-4-methoxyphenyl) malonamic acid (HMPMA). The cluster also contains 2 transcription factors (FDB3 and FPSE_08121), an aldo-keto reductase (FPSE_08125) that possibly associates with a ketone component of BOA and MBOA degradation, an esterase (FPSE_08126), an acyl-CoA transferase (FPSE_08120), a solute carrier protein (FPSE_08119) and a transmembrane transporter (FPSE_08127) proposed to shuttle metabolites of benzoxazolinone degradation. The sequence is that of Esterase FPSE_08126 from Fusarium pseudograminearum (strain CS3096) (Wheat and barley crown-rot fungus).